Consider the following 923-residue polypeptide: Leucine--tRNA ligase (923 aa).

Positions proline 41 to histidine 52 match the 'HIGH' region motif. Positions lysine 698 to serine 702 match the 'KMSKS' region motif. Residue lysine 701 coordinates ATP.

Belongs to the class-I aminoacyl-tRNA synthetase family.

The protein resides in the cytoplasm. It carries out the reaction tRNA(Leu) + L-leucine + ATP = L-leucyl-tRNA(Leu) + AMP + diphosphate. The polypeptide is Leucine--tRNA ligase (Amoebophilus asiaticus (strain 5a2)).